An 88-amino-acid chain; its full sequence is Acyl-CoA-binding domain-containing protein 7 (88 aa).

The 86-residue stretch at 3 to 88 (LQADFDQAAQ…ARELIEKYGI (86 aa)) folds into the ACB domain. Residues arginine 15, 30-34 (YGLYK), lysine 56, and tyrosine 75 contribute to the an acyl-CoA site.

Belongs to the ACBD7 family.

Its function is as follows. Binds medium- and long-chain acyl-CoA esters. In Mus musculus (Mouse), this protein is Acyl-CoA-binding domain-containing protein 7 (Acbd7).